Here is a 249-residue protein sequence, read N- to C-terminus: Small ribosomal subunit protein uS2 (249 aa).

This sequence belongs to the universal ribosomal protein uS2 family.

The protein is Small ribosomal subunit protein uS2 of Bordetella avium (strain 197N).